Reading from the N-terminus, the 282-residue chain is Pantothenate synthetase (282 aa).

Residue 32–39 coordinates ATP; the sequence is MGALHEGH. The active-site Proton donor is His39. Position 63 (Gln63) interacts with (R)-pantoate. Beta-alanine is bound at residue Gln63. 149–152 lines the ATP pocket; sequence GEKD. Residue Gln155 coordinates (R)-pantoate. ATP is bound by residues Val178 and 186-189; that span reads LSSR.

It belongs to the pantothenate synthetase family. In terms of assembly, homodimer.

It localises to the cytoplasm. The enzyme catalyses (R)-pantoate + beta-alanine + ATP = (R)-pantothenate + AMP + diphosphate + H(+). It functions in the pathway cofactor biosynthesis; (R)-pantothenate biosynthesis; (R)-pantothenate from (R)-pantoate and beta-alanine: step 1/1. Its function is as follows. Catalyzes the condensation of pantoate with beta-alanine in an ATP-dependent reaction via a pantoyl-adenylate intermediate. The polypeptide is Pantothenate synthetase (Paracoccus denitrificans (strain Pd 1222)).